A 254-amino-acid polypeptide reads, in one-letter code: Probable triosephosphate isomerase 2 (254 aa).

9 to 11 (NMK) contributes to the substrate binding site. Catalysis depends on histidine 96, which acts as the Electrophile. Glutamate 168 acts as the Proton acceptor in catalysis. 2 residues coordinate substrate: glycine 174 and serine 212.

It belongs to the triosephosphate isomerase family. In terms of assembly, homodimer.

Its subcellular location is the cytoplasm. The catalysed reaction is D-glyceraldehyde 3-phosphate = dihydroxyacetone phosphate. The protein operates within carbohydrate biosynthesis; gluconeogenesis. It participates in carbohydrate degradation; glycolysis; D-glyceraldehyde 3-phosphate from glycerone phosphate: step 1/1. Its function is as follows. Involved in the gluconeogenesis. Catalyzes stereospecifically the conversion of dihydroxyacetone phosphate (DHAP) to D-glyceraldehyde-3-phosphate (G3P). This Listeria monocytogenes serotype 4b (strain F2365) protein is Probable triosephosphate isomerase 2.